Consider the following 59-residue polypeptide: Large ribosomal subunit protein uL30 (59 aa).

It belongs to the universal ribosomal protein uL30 family. As to quaternary structure, part of the 50S ribosomal subunit.

The polypeptide is Large ribosomal subunit protein uL30 (Desulfatibacillum aliphaticivorans).